Reading from the N-terminus, the 297-residue chain is tRNA (guanine(37)-N(1))/4-demethylwyosine(37)-methyltransferase Taw22 (297 aa).

Residues Arg-89, Phe-106, and 128-129 (EL) each bind S-adenosyl-L-methionine.

The protein belongs to the class I-like SAM-binding methyltransferase superfamily. TRM5/TYW2 family.

It localises to the cytoplasm. The enzyme catalyses guanosine(37) in tRNA + S-adenosyl-L-methionine = N(1)-methylguanosine(37) in tRNA + S-adenosyl-L-homocysteine + H(+). It catalyses the reaction 4-demethylwyosine(37) in tRNA(Phe) + S-adenosyl-L-methionine = isowyosine(37) in tRNA(Phe) + S-adenosyl-L-homocysteine + H(+). Its function is as follows. Catalyzes both the N1-methylation of guanosine and the C7-methylation of 4-demethylwyosine (imG-14) at position 37 in tRNA(Phe). In Nanoarchaeum equitans (strain Kin4-M), this protein is tRNA (guanine(37)-N(1))/4-demethylwyosine(37)-methyltransferase Taw22.